A 382-amino-acid chain; its full sequence is ATP phosphoribosyltransferase regulatory subunit (382 aa).

The protein belongs to the class-II aminoacyl-tRNA synthetase family. HisZ subfamily. Heteromultimer composed of HisG and HisZ subunits.

It localises to the cytoplasm. Its pathway is amino-acid biosynthesis; L-histidine biosynthesis; L-histidine from 5-phospho-alpha-D-ribose 1-diphosphate: step 1/9. Functionally, required for the first step of histidine biosynthesis. May allow the feedback regulation of ATP phosphoribosyltransferase activity by histidine. The protein is ATP phosphoribosyltransferase regulatory subunit of Burkholderia cenocepacia (strain ATCC BAA-245 / DSM 16553 / LMG 16656 / NCTC 13227 / J2315 / CF5610) (Burkholderia cepacia (strain J2315)).